A 340-amino-acid chain; its full sequence is Probable sugar phosphate/phosphate translocator At3g14410 (340 aa).

A run of 10 helical transmembrane segments spans residues 12–32 (EFVT…QIFF), 44–64 (FPYP…LCFL), 80–100 (LEIY…TLWL), 110–130 (VAFA…LGVA), 141–161 (LLIM…ELNI), 163–183 (WIGV…LIFM), 197–217 (ISLM…PWIF), 234–254 (VVLT…FLVI), 260–282 (LTIR…LLFA), and 286–305 (LTII…AAYN). A disordered region spans residues 320-340 (ETPGDAESIPLVSQGNTNTER). A compositionally biased stretch (polar residues) spans 330–340 (LVSQGNTNTER).

Belongs to the TPT transporter family. TPT (TC 2.A.7.9) subfamily.

The protein localises to the membrane. This chain is Probable sugar phosphate/phosphate translocator At3g14410, found in Arabidopsis thaliana (Mouse-ear cress).